We begin with the raw amino-acid sequence, 260 residues long: Hydroxyethylthiazole kinase 1 (260 aa).

Methionine 39 lines the substrate pocket. The ATP site is built by arginine 115 and threonine 160. Glycine 187 contributes to the substrate binding site.

It belongs to the Thz kinase family. Requires Mg(2+) as cofactor.

The enzyme catalyses 5-(2-hydroxyethyl)-4-methylthiazole + ATP = 4-methyl-5-(2-phosphooxyethyl)-thiazole + ADP + H(+). It functions in the pathway cofactor biosynthesis; thiamine diphosphate biosynthesis; 4-methyl-5-(2-phosphoethyl)-thiazole from 5-(2-hydroxyethyl)-4-methylthiazole: step 1/1. Catalyzes the phosphorylation of the hydroxyl group of 4-methyl-5-beta-hydroxyethylthiazole (THZ). The protein is Hydroxyethylthiazole kinase 1 of Streptococcus pneumoniae (strain JJA).